Consider the following 307-residue polypeptide: Ribonuclease Z (307 aa).

7 residues coordinate Zn(2+): His63, His65, Asp67, His68, His140, Asp211, and His269. Asp67 acts as the Proton acceptor in catalysis.

It belongs to the RNase Z family. As to quaternary structure, homodimer. It depends on Zn(2+) as a cofactor.

The enzyme catalyses Endonucleolytic cleavage of RNA, removing extra 3' nucleotides from tRNA precursor, generating 3' termini of tRNAs. A 3'-hydroxy group is left at the tRNA terminus and a 5'-phosphoryl group is left at the trailer molecule.. In terms of biological role, zinc phosphodiesterase, which displays some tRNA 3'-processing endonuclease activity. Probably involved in tRNA maturation, by removing a 3'-trailer from precursor tRNA. In Geobacillus kaustophilus (strain HTA426), this protein is Ribonuclease Z.